The primary structure comprises 310 residues: GMP synthase [glutamine-hydrolyzing] subunit B (310 aa).

The GMPS ATP-PPase domain occupies 2 to 185 (FDAKSFIEES…LGLPEKIAHR (184 aa)). 29–35 (SGGVDSS) lines the ATP pocket.

As to quaternary structure, heterodimer composed of a glutamine amidotransferase subunit (A) and a GMP-binding subunit (B).

The catalysed reaction is XMP + L-glutamine + ATP + H2O = GMP + L-glutamate + AMP + diphosphate + 2 H(+). It participates in purine metabolism; GMP biosynthesis; GMP from XMP (L-Gln route): step 1/1. Catalyzes the synthesis of GMP from XMP. This is GMP synthase [glutamine-hydrolyzing] subunit B from Methanococcus vannielii (strain ATCC 35089 / DSM 1224 / JCM 13029 / OCM 148 / SB).